Consider the following 66-residue polypeptide: uncharacterized protein (66 aa).

This sequence to E.coli YfhJ.

This is an uncharacterized protein from Pseudomonas aeruginosa (strain ATCC 15692 / DSM 22644 / CIP 104116 / JCM 14847 / LMG 12228 / 1C / PRS 101 / PAO1).